A 364-amino-acid polypeptide reads, in one-letter code: Fructose-bisphosphate aldolase B (364 aa).

Ala-2 is subject to N-acetylalanine. N6-succinyllysine is present on Lys-13. A Phosphoserine modification is found at Ser-36. Position 39 is a phosphothreonine (Thr-39). Arg-43 contributes to the beta-D-fructose 1,6-bisphosphate binding site. Ser-89 is modified (phosphoserine). Phosphothreonine is present on Thr-119. Position 121 is an N6-succinyllysine (Lys-121). Position 132 is a phosphoserine (Ser-132). Glu-188 acts as the Proton acceptor in catalysis. Lys-230 functions as the Schiff-base intermediate with dihydroxyacetone-P in the catalytic mechanism. A phosphoserine mark is found at Ser-272, Ser-276, Ser-299, and Ser-301. Position 272–274 (272–274 (SGG)) interacts with beta-D-fructose 1,6-bisphosphate. A beta-D-fructose 1,6-bisphosphate-binding site is contributed by Arg-304. The residue at position 309 (Ser-309) is a Phosphoserine. An N6-succinyllysine modification is found at Lys-317.

This sequence belongs to the class I fructose-bisphosphate aldolase family. As to quaternary structure, homotetramer. Interacts with BBS1, BBS2, BBS4 and BBS7. Forms a ternary complex with G6PD and TP53; this interaction is direct.

It is found in the cytoplasm. It localises to the cytosol. The protein resides in the cytoskeleton. Its subcellular location is the microtubule organizing center. The protein localises to the centrosome. It is found in the centriolar satellite. It catalyses the reaction beta-D-fructose 1,6-bisphosphate = D-glyceraldehyde 3-phosphate + dihydroxyacetone phosphate. It carries out the reaction beta-D-fructose 1-phosphate = D-glyceraldehyde + dihydroxyacetone phosphate. Its pathway is carbohydrate degradation; glycolysis; D-glyceraldehyde 3-phosphate and glycerone phosphate from D-glucose: step 4/4. It participates in carbohydrate biosynthesis; gluconeogenesis. The protein operates within carbohydrate metabolism; fructose metabolism. Catalyzes the aldol cleavage of fructose 1,6-biphosphate to form two triosephosphates dihydroxyacetone phosphate and D-glyceraldehyde 3-phosphate in glycolysis as well as the reverse stereospecific aldol addition reaction in gluconeogenesis. In fructolysis, metabolizes fructose 1-phosphate derived from the phosphorylation of dietary fructose by fructokinase into dihydroxyacetone phosphate and D-glyceraldehyde. Acts as an adapter independently of its enzymatic activity, exerts a tumor suppressor role by stabilizing the ternary complex with G6PD and TP53 to inhibit G6PD activity and keep oxidative pentose phosphate metabolism in check. This chain is Fructose-bisphosphate aldolase B, found in Homo sapiens (Human).